A 414-amino-acid polypeptide reads, in one-letter code: Esterase FrsA (414 aa).

It belongs to the FrsA family.

It catalyses the reaction a carboxylic ester + H2O = an alcohol + a carboxylate + H(+). Its function is as follows. Catalyzes the hydrolysis of esters. The chain is Esterase FrsA from Shigella dysenteriae serotype 1 (strain Sd197).